A 276-amino-acid chain; its full sequence is Large ribosomal subunit protein uL2 (276 aa).

Disordered regions lie at residues 36–58 and 214–276; these read PLHK…GGGH and LGKR…RRKK.

This sequence belongs to the universal ribosomal protein uL2 family. Part of the 50S ribosomal subunit. Forms a bridge to the 30S subunit in the 70S ribosome.

One of the primary rRNA binding proteins. Required for association of the 30S and 50S subunits to form the 70S ribosome, for tRNA binding and peptide bond formation. It has been suggested to have peptidyltransferase activity; this is somewhat controversial. Makes several contacts with the 16S rRNA in the 70S ribosome. This chain is Large ribosomal subunit protein uL2, found in Halalkalibacterium halodurans (strain ATCC BAA-125 / DSM 18197 / FERM 7344 / JCM 9153 / C-125) (Bacillus halodurans).